A 407-amino-acid polypeptide reads, in one-letter code: Argininosuccinate synthase (407 aa).

ATP-binding positions include 13–21 and Ala40; that span reads AYSGGLDTS. Positions 91 and 96 each coordinate L-citrulline. Gly121 lines the ATP pocket. L-aspartate-binding residues include Thr123, Asn127, and Asp128. Position 127 (Asn127) interacts with L-citrulline. The L-citrulline site is built by Arg131, Ser182, Ser191, Glu267, and Tyr279.

It belongs to the argininosuccinate synthase family. Type 1 subfamily. In terms of assembly, homotetramer.

Its subcellular location is the cytoplasm. It catalyses the reaction L-citrulline + L-aspartate + ATP = 2-(N(omega)-L-arginino)succinate + AMP + diphosphate + H(+). It participates in amino-acid biosynthesis; L-arginine biosynthesis; L-arginine from L-ornithine and carbamoyl phosphate: step 2/3. The protein is Argininosuccinate synthase of Bartonella bacilliformis (strain ATCC 35685 / KC583 / Herrer 020/F12,63).